Here is a 1701-residue protein sequence, read N- to C-terminus: Merozoite surface protein 1 (1701 aa).

A signal peptide spans 1-19 (MKIIFFLCSFLFFIINTQC). Over residues 89–100 (GSGGSVASGGSG) the composition is skewed to gly residues. The tract at residues 89–118 (GSGGSVASGGSGNSRRTNPSDNSSDSNTKT) is disordered. Over residues 101–116 (NSRRTNPSDNSSDSNT) the composition is skewed to low complexity. Residues asparagine 110 and asparagine 239 are each glycosylated (N-linked (GlcNAc...) asparagine). A disordered region spans residues 322 to 344 (DAENPTTGSKPNPLPENKKKEVE). 3 N-linked (GlcNAc...) asparagine glycosylation sites follow: asparagine 470, asparagine 536, and asparagine 607. A disordered region spans residues 704–739 (SETTEDGGHSTHTLSQSGETEVTEETEVTEETVGHT). The span at 724-733 (EVTEETEVTE) shows a compositional bias: acidic residues. N-linked (GlcNAc...) asparagine glycans are attached at residues asparagine 802, asparagine 899, asparagine 919, asparagine 965, asparagine 991, asparagine 1089, and asparagine 1196. Over residues 889-927 (TGTSSTSSPGNTTVNTAQSATHSNSQNQQSNASSTNTQN) the composition is skewed to low complexity. Residues 889–936 (TGTSSTSSPGNTTVNTAQSATHSNSQNQQSNASSTNTQNGVAVSSGPA) form a disordered region. Disordered stretches follow at residues 1231-1259 (PPQP…TQIP) and 1451-1472 (KEKF…DEQK). A compositionally biased stretch (polar residues) spans 1245–1259 (VSGSSGSTKEETQIP). Pro residues predominate over residues 1456–1465 (SSPPTTPPSP). Asparagine 1588 is a glycosylation site (N-linked (GlcNAc...) asparagine). EGF-like domains are found at residues 1592–1632 (HQCV…VENP) and 1633–1680 (NPTC…IFCS). Intrachain disulfides connect cysteine 1594-cysteine 1605, cysteine 1599-cysteine 1615, cysteine 1617-cysteine 1628, cysteine 1636-cysteine 1649, cysteine 1643-cysteine 1663, and cysteine 1665-cysteine 1679. The GPI-anchor amidated serine moiety is linked to residue serine 1680. The propeptide at 1681–1701 (SSNFLGISFLLILMLILYSFI) is removed in mature form.

As to quaternary structure, forms a complex composed of subunits p83, p30, p38, and p42 which remain non-covalently associated; the complex is formed at the merozoite surface prior to egress from host erythrocytes. Forms a complex composed of processed MSP1 subunits, MSP6 subunit p36 and MSP7; the complex is formed at the merozoite surface prior to egress from host erythrocytes. Within the complex, interacts (via subunit p38) with MSP6 subunit p36 and (via subunits p83, p30 and p38) with MSP7 (via subunit p22). Forms a complex composed of MSP1, MSP6, DBLMSP1 and DBLMSP2. Within the complex, interacts (via subunit p38) with DBLMSP1 and DBLMSP2. Forms a complex composed of MSP1, and rhoptry proteins RhopH3, RAP1 and CLAG9/RhopH3. Within the complex, interacts (via subunits p42 and p19) with RhopH3 (via C-terminus). Forms a complex composed of MSP1, MSP6, MSP7, MSP9 and MSP3; within the complex, MSP6 and MSP9 mediate the binding to the host erythrocyte. Interacts (via subunits p19 and p42) with MSP9; the interaction is direct; MSP1 subunits p19 or p42, and MSP9 form a co-ligand complex that interacts with host SLC4A1/Band 3 protein. May interact with PFD6. Interacts with host spectrin. Interacts with host glycophorin GYPA in a sialic acid-independent manner. In terms of assembly, interacts with host proinflammatory cytokine S100P; the interaction blocks S100P inflammatory and chemotactic activities. As to quaternary structure, interacts with host SLC4A1/Band 3 (via 5ABC region) on the host erythrocyte surface in a sialic acid-independent manner. Post-translationally, the p190 precursor is cleaved by SUB1 prior to merozoite egress into 4 subunits p83, p30, p38, and p42 which remain non-covalently associated. SUB1-mediated proteolytic cleavage occurs in an orderly manner; the first cleavage occurs at the p30/p38 site, followed by cleavage at the p83/p30 site, in the 3D7 strain a second cleavage occurs at the N-terminus of p83, the last cleavage occurs at the p38/p42 site. The order of cleavage is essential for parasite viability. SUB1-mediated processing is essential for merozoite egress. In a second processing step during erythrocyte invasion, p42 is cleaved by SUB2 into p33 and p19; the latter remains attached to the merozoite surface via its GPI-anchor and is endocytosed during the subsequent ring stage.

It is found in the cell membrane. Its subcellular location is the secreted. The protein resides in the vacuole membrane. In terms of biological role, during the asexual blood stage, involved in merozoite egress from host erythrocytes possibly via its interaction with the host cytoskeleton protein spectrin resulting in the destabilization of the host cytoskeleton and thus leading to erythrocyte cell membrane rupture. Involved in the binding to host erythrocytes and is required for host erythrocyte invasion. By binding to host proinflammatory cytokine S100P may interfere with host immune responses. Its function is as follows. Involved in merozoite invasion of host erythrocytes. May play a role in the biogenesis and/or function of the food vacuole during the intraerythrocytic development. The sequence is that of Merozoite surface protein 1 from Plasmodium falciparum (isolate FC27 / Papua New Guinea).